Reading from the N-terminus, the 1170-residue chain is Probable mRNA-capping enzyme (1170 aa).

The active-site N6-GMP-lysine intermediate is Lys292. Residues Ser684–Thr1007 form the mRNA cap 0 methyltransferase domain. Asn693–Asn694 contributes to the mRNA binding site. S-adenosyl-L-methionine-binding positions include Lys697, Gly715, Asp737, and Gln813–Thr815.

This sequence in the N-terminal section; belongs to the dsDNA virus mRNA guanylyltransferase family. It in the C-terminal section; belongs to the class I-like SAM-binding methyltransferase superfamily. mRNA cap 0 methyltransferase family.

The protein localises to the virion. The enzyme catalyses a 5'-end triphospho-ribonucleoside in mRNA + H2O = a 5'-end diphospho-ribonucleoside in mRNA + phosphate + H(+). The catalysed reaction is a 5'-end diphospho-ribonucleoside in mRNA + GTP + H(+) = a 5'-end (5'-triphosphoguanosine)-ribonucleoside in mRNA + diphosphate. It catalyses the reaction a 5'-end (5'-triphosphoguanosine)-ribonucleoside in mRNA + S-adenosyl-L-methionine = a 5'-end (N(7)-methyl 5'-triphosphoguanosine)-ribonucleoside in mRNA + S-adenosyl-L-homocysteine. It participates in mRNA processing; mRNA capping. Functionally, responsible for methylating the 5'-cap structure of mRNAs. This Acanthamoeba polyphaga mimivirus (APMV) protein is Probable mRNA-capping enzyme.